The sequence spans 739 residues: Ent-kaurene synthase-like 3 (739 aa).

Mg(2+)-binding residues include aspartate 475, aspartate 479, asparagine 619, threonine 623, and glutamate 627. The short motif at 475–479 is the DDXXD motif element; sequence DDFFD.

The protein belongs to the terpene synthase family. It depends on Mg(2+) as a cofactor. Expressed in roots and stems.

In Oryza sativa subsp. japonica (Rice), this protein is Ent-kaurene synthase-like 3 (KSL3).